Reading from the N-terminus, the 207-residue chain is Glycerol-3-phosphate acyltransferase (207 aa).

A run of 6 helical transmembrane segments spans residues 7-27, 58-78, 83-103, 116-136, 141-161, and 166-186; these read YALA…LVIV, LATF…FTLL, VGFV…WLGF, LAFV…LGLF, ISSL…WLMG, and LILA…RENI.

It belongs to the PlsY family. As to quaternary structure, probably interacts with PlsX.

It localises to the cell inner membrane. The catalysed reaction is an acyl phosphate + sn-glycerol 3-phosphate = a 1-acyl-sn-glycero-3-phosphate + phosphate. It functions in the pathway lipid metabolism; phospholipid metabolism. Functionally, catalyzes the transfer of an acyl group from acyl-phosphate (acyl-PO(4)) to glycerol-3-phosphate (G3P) to form lysophosphatidic acid (LPA). This enzyme utilizes acyl-phosphate as fatty acyl donor, but not acyl-CoA or acyl-ACP. In Hyphomonas neptunium (strain ATCC 15444), this protein is Glycerol-3-phosphate acyltransferase.